The sequence spans 201 residues: Small ribosomal subunit protein uS4c (201 aa).

Positions 20-44 (GLTSKRPRAGSDLRNQSRSGKKSQY) are disordered. Residues 89-152 (MRLDNTLFRL…NSRTLVQNLL (64 aa)) form the S4 RNA-binding domain.

The protein belongs to the universal ribosomal protein uS4 family. As to quaternary structure, part of the 30S ribosomal subunit. Contacts protein S5. The interaction surface between S4 and S5 is involved in control of translational fidelity.

The protein localises to the plastid. It localises to the chloroplast. Functionally, one of the primary rRNA binding proteins, it binds directly to 16S rRNA where it nucleates assembly of the body of the 30S subunit. In terms of biological role, with S5 and S12 plays an important role in translational accuracy. The protein is Small ribosomal subunit protein uS4c (rps4) of Aethionema grandiflorum (Persian stone-cress).